The sequence spans 520 residues: EGF domain-specific O-linked N-acetylglucosamine transferase (520 aa).

The first 16 residues, 1–16, serve as a signal peptide directing secretion; the sequence is MPILPILIGILHLSLA. 3 N-linked (GlcNAc...) asparagine glycosylation sites follow: N52, N176, and N250. Positions 292–294 match the Required for optimal activity motif; the sequence is DVE. Residue N479 is glycosylated (N-linked (GlcNAc...) asparagine). The Prevents secretion from ER signature appears at 517–520; sequence RNEL.

A divalent metal cation serves as cofactor.

It localises to the endoplasmic reticulum lumen. It catalyses the reaction L-seryl-[protein] + UDP-N-acetyl-alpha-D-glucosamine = 3-O-(N-acetyl-beta-D-glucosaminyl)-L-seryl-[protein] + UDP + H(+). The enzyme catalyses L-threonyl-[protein] + UDP-N-acetyl-alpha-D-glucosamine = 3-O-(N-acetyl-beta-D-glucosaminyl)-L-threonyl-[protein] + UDP + H(+). Its function is as follows. Catalyzes the transfer of a single N-acetylglucosamine from UDP-GlcNAc to a serine or threonine residue in extracellular proteins resulting in their modification with a beta-linked N-acetylglucosamine (O-GlcNAc). Specifically glycosylates the Thr residue located between the fifth and sixth conserved cysteines of folded EGF-like domains. Involved in epithelial cell adhesion/interaction with the extracellular matrix by mediating glycosylation of proteins in the secretory pathway, such as Dumpy (Dp). In Drosophila melanogaster (Fruit fly), this protein is EGF domain-specific O-linked N-acetylglucosamine transferase (Eogt).